The sequence spans 264 residues: Thiazole synthase (264 aa).

Residue Lys-106 is the Schiff-base intermediate with DXP of the active site. Residues Gly-167, 193–194 (AG), and 215–216 (NS) contribute to the 1-deoxy-D-xylulose 5-phosphate site.

Belongs to the ThiG family. Homotetramer. Forms heterodimers with either ThiH or ThiS.

It is found in the cytoplasm. It catalyses the reaction [ThiS sulfur-carrier protein]-C-terminal-Gly-aminoethanethioate + 2-iminoacetate + 1-deoxy-D-xylulose 5-phosphate = [ThiS sulfur-carrier protein]-C-terminal Gly-Gly + 2-[(2R,5Z)-2-carboxy-4-methylthiazol-5(2H)-ylidene]ethyl phosphate + 2 H2O + H(+). Its pathway is cofactor biosynthesis; thiamine diphosphate biosynthesis. In terms of biological role, catalyzes the rearrangement of 1-deoxy-D-xylulose 5-phosphate (DXP) to produce the thiazole phosphate moiety of thiamine. Sulfur is provided by the thiocarboxylate moiety of the carrier protein ThiS. In vitro, sulfur can be provided by H(2)S. This Prochlorococcus marinus (strain MIT 9301) protein is Thiazole synthase.